The following is a 301-amino-acid chain: Acetylglutamate kinase (301 aa).

Substrate-binding positions include 71-72 (GG), Arg-93, and Asn-198.

The protein belongs to the acetylglutamate kinase family. ArgB subfamily.

Its subcellular location is the cytoplasm. It carries out the reaction N-acetyl-L-glutamate + ATP = N-acetyl-L-glutamyl 5-phosphate + ADP. Its pathway is amino-acid biosynthesis; L-arginine biosynthesis; N(2)-acetyl-L-ornithine from L-glutamate: step 2/4. In terms of biological role, catalyzes the ATP-dependent phosphorylation of N-acetyl-L-glutamate. In Zymomonas mobilis subsp. mobilis (strain ATCC 31821 / ZM4 / CP4), this protein is Acetylglutamate kinase.